The primary structure comprises 78 residues: Large ribosomal subunit protein bL28 (78 aa).

A disordered region spans residues 1 to 24 (MSQVCQVTGKRPVTGNNVSHSQRK).

The protein belongs to the bacterial ribosomal protein bL28 family.

The protein is Large ribosomal subunit protein bL28 of Chromohalobacter salexigens (strain ATCC BAA-138 / DSM 3043 / CIP 106854 / NCIMB 13768 / 1H11).